A 315-amino-acid polypeptide reads, in one-letter code: 4-hydroxy-3-methylbut-2-enyl diphosphate reductase (315 aa).

Cys12 contacts [4Fe-4S] cluster. 2 residues coordinate (2E)-4-hydroxy-3-methylbut-2-enyl diphosphate: His41 and His74. 2 residues coordinate dimethylallyl diphosphate: His41 and His74. Residues His41 and His74 each coordinate isopentenyl diphosphate. Cys96 is a [4Fe-4S] cluster binding site. His124 contributes to the (2E)-4-hydroxy-3-methylbut-2-enyl diphosphate binding site. His124 provides a ligand contact to dimethylallyl diphosphate. An isopentenyl diphosphate-binding site is contributed by His124. Glu126 functions as the Proton donor in the catalytic mechanism. Thr168 is a binding site for (2E)-4-hydroxy-3-methylbut-2-enyl diphosphate. Cys198 serves as a coordination point for [4Fe-4S] cluster. Positions 226, 227, 228, and 270 each coordinate (2E)-4-hydroxy-3-methylbut-2-enyl diphosphate. Positions 226, 227, 228, and 270 each coordinate dimethylallyl diphosphate. Ser226, Ser227, Asn228, and Ser270 together coordinate isopentenyl diphosphate.

It belongs to the IspH family. [4Fe-4S] cluster is required as a cofactor.

The enzyme catalyses isopentenyl diphosphate + 2 oxidized [2Fe-2S]-[ferredoxin] + H2O = (2E)-4-hydroxy-3-methylbut-2-enyl diphosphate + 2 reduced [2Fe-2S]-[ferredoxin] + 2 H(+). It carries out the reaction dimethylallyl diphosphate + 2 oxidized [2Fe-2S]-[ferredoxin] + H2O = (2E)-4-hydroxy-3-methylbut-2-enyl diphosphate + 2 reduced [2Fe-2S]-[ferredoxin] + 2 H(+). The protein operates within isoprenoid biosynthesis; dimethylallyl diphosphate biosynthesis; dimethylallyl diphosphate from (2E)-4-hydroxy-3-methylbutenyl diphosphate: step 1/1. It functions in the pathway isoprenoid biosynthesis; isopentenyl diphosphate biosynthesis via DXP pathway; isopentenyl diphosphate from 1-deoxy-D-xylulose 5-phosphate: step 6/6. In terms of biological role, catalyzes the conversion of 1-hydroxy-2-methyl-2-(E)-butenyl 4-diphosphate (HMBPP) into a mixture of isopentenyl diphosphate (IPP) and dimethylallyl diphosphate (DMAPP). Acts in the terminal step of the DOXP/MEP pathway for isoprenoid precursor biosynthesis. This is 4-hydroxy-3-methylbut-2-enyl diphosphate reductase from Pseudomonas putida (strain GB-1).